A 491-amino-acid polypeptide reads, in one-letter code: 3-octaprenyl-4-hydroxybenzoate carboxy-lyase (491 aa).

Position 172 (Asn172) interacts with Mn(2+). Prenylated FMN is bound by residues Ile175 to Arg177, Arg189 to Leu191, and Arg194 to Gly195. Glu238 is a Mn(2+) binding site. Catalysis depends on Asp287, which acts as the Proton donor.

Belongs to the UbiD family. As to quaternary structure, homohexamer. It depends on prenylated FMN as a cofactor. The cofactor is Mn(2+).

The protein localises to the cell membrane. It carries out the reaction a 4-hydroxy-3-(all-trans-polyprenyl)benzoate + H(+) = a 2-(all-trans-polyprenyl)phenol + CO2. Its pathway is cofactor biosynthesis; ubiquinone biosynthesis. Its function is as follows. Catalyzes the decarboxylation of 3-octaprenyl-4-hydroxy benzoate to 2-octaprenylphenol, an intermediate step in ubiquinone biosynthesis. The chain is 3-octaprenyl-4-hydroxybenzoate carboxy-lyase from Klebsiella pneumoniae subsp. pneumoniae (strain ATCC 700721 / MGH 78578).